The chain runs to 346 residues: Protein MelA (346 aa).

2 VOC domains span residues 12 to 141 (GIEF…DFEA) and 155 to 305 (EVDH…IFTK). Positions 158, 237, and 314 each coordinate Fe cation.

It belongs to the 4HPPD family. It depends on Fe cation as a cofactor.

The protein localises to the cytoplasm. It functions in the pathway pigment biosynthesis; melanin biosynthesis. The polypeptide is Protein MelA (melA) (Shewanella colwelliana (Alteromonas colwelliana)).